The chain runs to 255 residues: Hydroxyacylglutathione hydrolase (255 aa).

7 residues coordinate Zn(2+): His-56, His-58, Asp-60, His-61, His-114, Asp-133, and His-171.

It belongs to the metallo-beta-lactamase superfamily. Glyoxalase II family. Monomer. Zn(2+) serves as cofactor.

It catalyses the reaction an S-(2-hydroxyacyl)glutathione + H2O = a 2-hydroxy carboxylate + glutathione + H(+). It participates in secondary metabolite metabolism; methylglyoxal degradation; (R)-lactate from methylglyoxal: step 2/2. In terms of biological role, thiolesterase that catalyzes the hydrolysis of S-D-lactoyl-glutathione to form glutathione and D-lactic acid. In Rhodopseudomonas palustris (strain BisB5), this protein is Hydroxyacylglutathione hydrolase.